The chain runs to 208 residues: N-(5'-phosphoribosyl)anthranilate isomerase (208 aa).

It belongs to the TrpF family.

The catalysed reaction is N-(5-phospho-beta-D-ribosyl)anthranilate = 1-(2-carboxyphenylamino)-1-deoxy-D-ribulose 5-phosphate. It functions in the pathway amino-acid biosynthesis; L-tryptophan biosynthesis; L-tryptophan from chorismate: step 3/5. This is N-(5'-phosphoribosyl)anthranilate isomerase from Chlamydia trachomatis serovar A (strain ATCC VR-571B / DSM 19440 / HAR-13).